Consider the following 642-residue polypeptide: Threonine--tRNA ligase (642 aa).

One can recognise a TGS domain in the interval methionine 1–threonine 61. The interval aspartate 243–proline 534 is catalytic. Lysine 286 is subject to N6-acetyllysine. Zn(2+)-binding residues include cysteine 334, histidine 385, and histidine 511.

Belongs to the class-II aminoacyl-tRNA synthetase family. Homodimer. Zn(2+) is required as a cofactor.

Its subcellular location is the cytoplasm. The catalysed reaction is tRNA(Thr) + L-threonine + ATP = L-threonyl-tRNA(Thr) + AMP + diphosphate + H(+). In terms of biological role, catalyzes the attachment of threonine to tRNA(Thr) in a two-step reaction: L-threonine is first activated by ATP to form Thr-AMP and then transferred to the acceptor end of tRNA(Thr). Also edits incorrectly charged L-seryl-tRNA(Thr). This chain is Threonine--tRNA ligase, found in Shigella dysenteriae serotype 1 (strain Sd197).